A 110-amino-acid chain; its full sequence is UPF0122 protein GK1195 (110 aa).

Belongs to the UPF0122 family.

Its function is as follows. Might take part in the signal recognition particle (SRP) pathway. This is inferred from the conservation of its genetic proximity to ftsY/ffh. May be a regulatory protein. The sequence is that of UPF0122 protein GK1195 from Geobacillus kaustophilus (strain HTA426).